Here is a 233-residue protein sequence, read N- to C-terminus: 2,3,4,5-tetrahydropyridine-2,6-dicarboxylate N-acetyltransferase (233 aa).

It belongs to the transferase hexapeptide repeat family. DapH subfamily.

It catalyses the reaction (S)-2,3,4,5-tetrahydrodipicolinate + acetyl-CoA + H2O = L-2-acetamido-6-oxoheptanedioate + CoA. It functions in the pathway amino-acid biosynthesis; L-lysine biosynthesis via DAP pathway; LL-2,6-diaminopimelate from (S)-tetrahydrodipicolinate (acetylase route): step 1/3. Catalyzes the transfer of an acetyl group from acetyl-CoA to tetrahydrodipicolinate. The protein is 2,3,4,5-tetrahydropyridine-2,6-dicarboxylate N-acetyltransferase of Thermosipho africanus (strain TCF52B).